We begin with the raw amino-acid sequence, 230 residues long: Ribonuclease 3 (230 aa).

Positions M1–G134 constitute an RNase III domain. A Mg(2+)-binding site is contributed by E47. D51 is a catalytic residue. Mg(2+) contacts are provided by D120 and E123. E123 is a catalytic residue. The region spanning D160–E229 is the DRBM domain.

The protein belongs to the ribonuclease III family. As to quaternary structure, homodimer. It depends on Mg(2+) as a cofactor.

The protein resides in the cytoplasm. The enzyme catalyses Endonucleolytic cleavage to 5'-phosphomonoester.. In terms of biological role, digests double-stranded RNA. Involved in the processing of primary rRNA transcript to yield the immediate precursors to the large and small rRNAs (23S and 16S). Processes some mRNAs, and tRNAs when they are encoded in the rRNA operon. Processes pre-crRNA and tracrRNA of type II CRISPR loci if present in the organism. The protein is Ribonuclease 3 of Streptococcus pyogenes serotype M49 (strain NZ131).